Consider the following 467-residue polypeptide: 5-phosphohydroxy-L-lysine phospho-lyase (467 aa).

K278 bears the N6-(pyridoxal phosphate)lysine mark.

It belongs to the class-III pyridoxal-phosphate-dependent aminotransferase family. As to quaternary structure, homotetramer. It depends on pyridoxal 5'-phosphate as a cofactor.

The protein resides in the mitochondrion. It carries out the reaction (5R)-5-phosphooxy-L-lysine + H2O = (S)-2-amino-6-oxohexanoate + NH4(+) + phosphate. Its function is as follows. Catalyzes the pyridoxal-phosphate-dependent breakdown of 5-phosphohydroxy-L-lysine, converting it to ammonia, inorganic phosphate and 2-aminoadipate semialdehyde. The chain is 5-phosphohydroxy-L-lysine phospho-lyase (Phykpl) from Mus musculus (Mouse).